The primary structure comprises 411 residues: uncharacterized protein (411 aa).

Disordered regions lie at residues 1–91 (METP…QDEE) and 253–280 (KGPLARRNEEDENKPQEKRPRAVTAYSP). The segment covering 46 to 57 (ETTESADSENDM) has biased composition (acidic residues). Low complexity predominate over residues 74–86 (SNESFSSNQSTES). Residues 258–272 (RRNEEDENKPQEKRP) are compositionally biased toward basic and acidic residues. A Phosphoserine modification is found at S279.

As to expression, widely expressed, highest levels in cerebellum, brain cortex, hippocampus, pons, putamen and amygdala. Highly expressed in neurons, but also present in glial cells. Slightly higher expression in the dorsolateral prefrontal cortex of schizophrenic patients compared to control individuals.

The protein localises to the cytoplasm. This is an uncharacterized protein from Homo sapiens (Human).